A 188-amino-acid polypeptide reads, in one-letter code: Threonylcarbamoyl-AMP synthase (188 aa).

The region spanning 3–188 is the YrdC-like domain; the sequence is QLHPSEIKDI…RSGKILRNGQ (186 aa).

Belongs to the SUA5 family. TsaC subfamily.

The protein resides in the cytoplasm. The catalysed reaction is L-threonine + hydrogencarbonate + ATP = L-threonylcarbamoyladenylate + diphosphate + H2O. Functionally, required for the formation of a threonylcarbamoyl group on adenosine at position 37 (t(6)A37) in tRNAs that read codons beginning with adenine. Catalyzes the conversion of L-threonine, HCO(3)(-)/CO(2) and ATP to give threonylcarbamoyl-AMP (TC-AMP) as the acyladenylate intermediate, with the release of diphosphate. This Shewanella sp. (strain MR-4) protein is Threonylcarbamoyl-AMP synthase.